Reading from the N-terminus, the 396-residue chain is Phosphoglycerate kinase (396 aa).

Substrate is bound by residues 21 to 23, Arg37, 60 to 63, Arg121, and Arg154; these read DFN and HLGR. Residues Lys205, Gly296, Glu327, and 353–356 contribute to the ATP site; that span reads GGDS.

This sequence belongs to the phosphoglycerate kinase family. As to quaternary structure, monomer.

It localises to the cytoplasm. The catalysed reaction is (2R)-3-phosphoglycerate + ATP = (2R)-3-phospho-glyceroyl phosphate + ADP. The protein operates within carbohydrate degradation; glycolysis; pyruvate from D-glyceraldehyde 3-phosphate: step 2/5. The sequence is that of Phosphoglycerate kinase from Anaeromyxobacter sp. (strain K).